A 446-amino-acid chain; its full sequence is NAD kinase (446 aa).

Phosphoserine is present on residues serine 46, serine 48, serine 50, serine 55, and serine 64.

The protein belongs to the NAD kinase family. The cofactor is a divalent metal cation. In terms of tissue distribution, widely expressed but not detected in skeletal muscle.

It carries out the reaction NAD(+) + ATP = ADP + NADP(+) + H(+). The polypeptide is NAD kinase (NADK) (Homo sapiens (Human)).